We begin with the raw amino-acid sequence, 630 residues long: UvrABC system protein C (630 aa).

The GIY-YIG domain maps to 18–97 (TQSGVYLMKN…IKKHRPKYNI (80 aa)). In terms of domain architecture, UVR spans 207 to 242 (KKVIKSMTEKMMGAADEEKFEVAARLRDSIEAIKAI).

It belongs to the UvrC family. In terms of assembly, interacts with UvrB in an incision complex.

It is found in the cytoplasm. Its function is as follows. The UvrABC repair system catalyzes the recognition and processing of DNA lesions. UvrC both incises the 5' and 3' sides of the lesion. The N-terminal half is responsible for the 3' incision and the C-terminal half is responsible for the 5' incision. This chain is UvrABC system protein C, found in Bdellovibrio bacteriovorus (strain ATCC 15356 / DSM 50701 / NCIMB 9529 / HD100).